The following is a 407-amino-acid chain: 1-deoxy-D-xylulose 5-phosphate reductoisomerase (407 aa).

Threonine 25, glycine 26, serine 27, isoleucine 28, asparagine 53, and asparagine 136 together coordinate NADPH. Residue lysine 137 participates in 1-deoxy-D-xylulose 5-phosphate binding. Glutamate 138 lines the NADPH pocket. Aspartate 162 contacts Mn(2+). Positions 163, 164, 188, and 211 each coordinate 1-deoxy-D-xylulose 5-phosphate. Glutamate 164 serves as a coordination point for Mn(2+). Residue glycine 217 coordinates NADPH. 1-deoxy-D-xylulose 5-phosphate contacts are provided by serine 224, asparagine 229, lysine 230, and glutamate 233. Glutamate 233 serves as a coordination point for Mn(2+).

The protein belongs to the DXR family. The cofactor is Mg(2+). Mn(2+) serves as cofactor.

It catalyses the reaction 2-C-methyl-D-erythritol 4-phosphate + NADP(+) = 1-deoxy-D-xylulose 5-phosphate + NADPH + H(+). Its pathway is isoprenoid biosynthesis; isopentenyl diphosphate biosynthesis via DXP pathway; isopentenyl diphosphate from 1-deoxy-D-xylulose 5-phosphate: step 1/6. Its function is as follows. Catalyzes the NADPH-dependent rearrangement and reduction of 1-deoxy-D-xylulose-5-phosphate (DXP) to 2-C-methyl-D-erythritol 4-phosphate (MEP). In Bradyrhizobium diazoefficiens (strain JCM 10833 / BCRC 13528 / IAM 13628 / NBRC 14792 / USDA 110), this protein is 1-deoxy-D-xylulose 5-phosphate reductoisomerase.